The primary structure comprises 256 residues: Type III pantothenate kinase (256 aa).

6–13 (DIGNTHIV) lines the ATP pocket. Residue 109–112 (GADR) coordinates substrate. The active-site Proton acceptor is Asp-111. Asp-132 contributes to the K(+) binding site. ATP is bound at residue Thr-135. Thr-186 provides a ligand contact to substrate.

It belongs to the type III pantothenate kinase family. In terms of assembly, homodimer. NH4(+) serves as cofactor. The cofactor is K(+).

The protein localises to the cytoplasm. It carries out the reaction (R)-pantothenate + ATP = (R)-4'-phosphopantothenate + ADP + H(+). Its pathway is cofactor biosynthesis; coenzyme A biosynthesis; CoA from (R)-pantothenate: step 1/5. Catalyzes the phosphorylation of pantothenate (Pan), the first step in CoA biosynthesis. The polypeptide is Type III pantothenate kinase (Fusobacterium nucleatum subsp. nucleatum (strain ATCC 25586 / DSM 15643 / BCRC 10681 / CIP 101130 / JCM 8532 / KCTC 2640 / LMG 13131 / VPI 4355)).